We begin with the raw amino-acid sequence, 118 residues long: Probable mitochondrial pyruvate carrier 2 (118 aa).

Transmembrane regions (helical) follow at residues 19-35 (VHFWAPAMKWTLVLSGI), 50-66 (YAALCATGAIWTRWSLI), and 72-94 (YFNATVNFFLAIVGAVQVSRILV).

The protein belongs to the mitochondrial pyruvate carrier (MPC) (TC 2.A.105) family. In terms of assembly, the functional 150 kDa pyruvate import complex is a heteromer of mpc1 and mpc2.

It is found in the mitochondrion inner membrane. In terms of biological role, mediates the uptake of pyruvate into mitochondria. In Schizosaccharomyces pombe (strain 972 / ATCC 24843) (Fission yeast), this protein is Probable mitochondrial pyruvate carrier 2.